The chain runs to 802 residues: Oligophrenin-1 (802 aa).

The PH domain occupies 265–368 (QPTIEGYLYT…WMEAMDGKEP (104 aa)). Residues 380-564 (MELNEVGFKF…ILIEHFGKIY (185 aa)) enclose the Rho-GAP domain. 2 disordered regions span residues 606–665 (SLDE…SEPC) and 681–802 (GTKA…GDES). The span at 617–627 (QTPNGTITSNL) shows a compositional bias: polar residues. The span at 716–732 (HHKEGDTDGFSKVRPPG) shows a compositional bias: basic and acidic residues.

In terms of assembly, interacts with HOMER1. Interacts with AMPA receptor complexes. Interacts with SH3GL2 (endophilin-A1). Interacts (via C-terminus) with NR1D1.

It is found in the postsynapse. It localises to the presynapse. The protein localises to the cell projection. Its subcellular location is the axon. The protein resides in the dendritic spine. It is found in the dendrite. It localises to the cytoplasm. Its function is as follows. Stimulates GTP hydrolysis of members of the Rho family. Its action on RHOA activity and signaling is implicated in growth and stabilization of dendritic spines, and therefore in synaptic function. Critical for the stabilization of AMPA receptors at postsynaptic sites. Critical for the regulation of synaptic vesicle endocytosis at presynaptic terminals. Required for the localization of NR1D1 to dendrites, can suppress its repressor activity and protect it from proteasomal degradation. This chain is Oligophrenin-1 (Ophn1), found in Mus musculus (Mouse).